A 215-amino-acid polypeptide reads, in one-letter code: Cytochrome b6 (215 aa).

Residues isoleucine 32 to phenylalanine 52 form a helical membrane-spanning segment. Heme c is bound at residue cysteine 35. Heme b is bound by residues histidine 86 and histidine 100. The next 3 helical transmembrane spans lie at alanine 90–phenylalanine 110, leucine 116–tyrosine 136, and leucine 186–isoleucine 206. Positions 187 and 202 each coordinate heme b.

Belongs to the cytochrome b family. PetB subfamily. As to quaternary structure, the 4 large subunits of the cytochrome b6-f complex are cytochrome b6, subunit IV (17 kDa polypeptide, PetD), cytochrome f and the Rieske protein, while the 4 small subunits are PetG, PetL, PetM and PetN. The complex functions as a dimer. Heme b is required as a cofactor. The cofactor is heme c.

The protein resides in the plastid. It is found in the chloroplast thylakoid membrane. Its function is as follows. Component of the cytochrome b6-f complex, which mediates electron transfer between photosystem II (PSII) and photosystem I (PSI), cyclic electron flow around PSI, and state transitions. The sequence is that of Cytochrome b6 from Pelargonium hortorum (Common geranium).